The chain runs to 581 residues: ATP-dependent lipid A-core flippase (581 aa).

The next 5 membrane-spanning stretches (helical) occupy residues 15 to 35 (LWPI…ALIL), 68 to 88 (LIVI…SYCI), 152 to 172 (IIGL…ILIV), 252 to 272 (PIIQ…ASFP), and 274 to 294 (IMET…IALM). One can recognise an ABC transmembrane type-1 domain in the interval 27-309 (IVAAVALILN…LTNVNAQFQR (283 aa)). The region spanning 341 to 577 (IEFRNVTFCY…NGVYSQLHRM (237 aa)) is the ABC transporter domain. 375–382 (GRSGSGKS) contributes to the ATP binding site.

The protein belongs to the ABC transporter superfamily. Lipid exporter (TC 3.A.1.106) family. As to quaternary structure, homodimer.

The protein resides in the cell inner membrane. The catalysed reaction is ATP + H2O + lipid A-core oligosaccharideSide 1 = ADP + phosphate + lipid A-core oligosaccharideSide 2.. Functionally, involved in lipopolysaccharide (LPS) biosynthesis. Translocates lipid A-core from the inner to the outer leaflet of the inner membrane. Transmembrane domains (TMD) form a pore in the inner membrane and the ATP-binding domain (NBD) is responsible for energy generation. This chain is ATP-dependent lipid A-core flippase, found in Photorhabdus laumondii subsp. laumondii (strain DSM 15139 / CIP 105565 / TT01) (Photorhabdus luminescens subsp. laumondii).